The chain runs to 119 residues: Putative ankyrin repeat domain-containing protein 26-like 1 (119 aa).

Positions 15 to 112 (EKEEDLLHKN…EKQSRQRLTK (98 aa)) form a coiled coil.

The chain is Putative ankyrin repeat domain-containing protein 26-like 1 (ANKRD36BP1) from Homo sapiens (Human).